Consider the following 396-residue polypeptide: Ornithine aminotransferase 2 (396 aa).

K255 is modified (N6-(pyridoxal phosphate)lysine).

This sequence belongs to the class-III pyridoxal-phosphate-dependent aminotransferase family. OAT subfamily. Requires pyridoxal 5'-phosphate as cofactor.

It is found in the cytoplasm. The enzyme catalyses a 2-oxocarboxylate + L-ornithine = L-glutamate 5-semialdehyde + an L-alpha-amino acid. It participates in amino-acid biosynthesis; L-proline biosynthesis; L-glutamate 5-semialdehyde from L-ornithine: step 1/1. Functionally, catalyzes the interconversion of ornithine to glutamate semialdehyde. The polypeptide is Ornithine aminotransferase 2 (Staphylococcus saprophyticus subsp. saprophyticus (strain ATCC 15305 / DSM 20229 / NCIMB 8711 / NCTC 7292 / S-41)).